A 134-amino-acid chain; its full sequence is Large ribosomal subunit protein uL16c (134 aa).

Belongs to the universal ribosomal protein uL16 family. As to quaternary structure, part of the 50S ribosomal subunit.

Its subcellular location is the plastid. The protein localises to the chloroplast. The sequence is that of Large ribosomal subunit protein uL16c from Solanum lycopersicum (Tomato).